Reading from the N-terminus, the 253-residue chain is Zinc import ATP-binding protein ZnuC (253 aa).

Residues 6 to 227 (VTLNKISVTF…FGNRGAEQLA (222 aa)) form the ABC transporter domain. 38–45 (GPNGAGKS) is an ATP binding site.

The protein belongs to the ABC transporter superfamily. Zinc importer (TC 3.A.1.15.5) family. In terms of assembly, the complex is composed of two ATP-binding proteins (ZnuC), two transmembrane proteins (ZnuB) and a solute-binding protein (ZnuA).

The protein localises to the cell inner membrane. It carries out the reaction Zn(2+)(out) + ATP(in) + H2O(in) = Zn(2+)(in) + ADP(in) + phosphate(in) + H(+)(in). Functionally, part of the ABC transporter complex ZnuABC involved in zinc import. Responsible for energy coupling to the transport system. The chain is Zinc import ATP-binding protein ZnuC from Yersinia pestis bv. Antiqua (strain Antiqua).